We begin with the raw amino-acid sequence, 235 residues long: Small ribosomal subunit protein eS6 (235 aa).

Serine 229 and serine 230 each carry phosphoserine.

Belongs to the eukaryotic ribosomal protein eS6 family. Post-translationally, phosphorylated.

This chain is Small ribosomal subunit protein eS6 (RPS6), found in Kluyveromyces marxianus (Yeast).